The primary structure comprises 762 residues: Putative BTB/POZ domain-containing protein L272 (762 aa).

One can recognise a BTB domain in the interval threonine 16 to asparagine 86. The span at aspartate 390–asparagine 410 shows a compositional bias: acidic residues. Disordered regions lie at residues aspartate 390–aspartate 411 and isoleucine 532–asparagine 556. Residues isoleucine 532–aspartate 543 are compositionally biased toward low complexity. Residues phenylalanine 737 to asparagine 762 are a coiled coil.

It belongs to the mimivirus BTB/WD family.

This is Putative BTB/POZ domain-containing protein L272 from Acanthamoeba polyphaga (Amoeba).